The chain runs to 356 residues: Glutamine synthetase PR-1 (356 aa).

Positions 19–99 (VIAEYIWIGG…VICDAYTPAG (81 aa)) constitute a GS beta-grasp domain. Residues 41 to 64 (PGPVKNPSELPKWNYDGSSTGQAP) form a disordered region. In terms of domain architecture, GS catalytic spans 106–356 (KRHNAAKIFS…IADTTILWKP (251 aa)).

The protein belongs to the glutamine synthetase family. In terms of assembly, homooctamer. Roots.

It is found in the cytoplasm. The catalysed reaction is L-glutamate + NH4(+) + ATP = L-glutamine + ADP + phosphate + H(+). This is Glutamine synthetase PR-1 from Phaseolus vulgaris (Kidney bean).